Reading from the N-terminus, the 473-residue chain is Arginine biosynthesis bifunctional protein ArgJ, mitochondrial (473 aa).

Substrate is bound by residues threonine 201, lysine 230, threonine 241, glutamate 328, asparagine 468, and threonine 473. Threonine 241 functions as the Nucleophile in the catalytic mechanism.

The protein belongs to the ArgJ family. Heterodimer of an alpha and a beta chain. In terms of processing, the alpha and beta chains are autoproteolytically processed from a single precursor protein within the mitochondrion.

The protein resides in the mitochondrion matrix. It carries out the reaction N(2)-acetyl-L-ornithine + L-glutamate = N-acetyl-L-glutamate + L-ornithine. The enzyme catalyses L-glutamate + acetyl-CoA = N-acetyl-L-glutamate + CoA + H(+). The protein operates within amino-acid biosynthesis; L-arginine biosynthesis; L-ornithine and N-acetyl-L-glutamate from L-glutamate and N(2)-acetyl-L-ornithine (cyclic): step 1/1. Its pathway is amino-acid biosynthesis; L-arginine biosynthesis; N(2)-acetyl-L-ornithine from L-glutamate: step 1/4. Catalyzes two activities which are involved in the cyclic version of arginine biosynthesis: the synthesis of acetylglutamate from glutamate and acetyl-CoA, and of ornithine by transacetylation between acetylornithine and glutamate. This Paracoccidioides brasiliensis (strain Pb18) protein is Arginine biosynthesis bifunctional protein ArgJ, mitochondrial.